We begin with the raw amino-acid sequence, 931 residues long: Isoleucine--tRNA ligase (931 aa).

Positions 1 to 14 are enriched in polar residues; it reads MDYSKTLNLPQTQF. The tract at residues 1-25 is disordered; sequence MDYSKTLNLPQTQFPMRGNLPQREP. Residues 57-67 carry the 'HIGH' region motif; the sequence is PYANGHIHLGH. E559 is an L-isoleucyl-5'-AMP binding site. A 'KMSKS' region motif is present at residues 600-604; the sequence is KMSKS. An ATP-binding site is contributed by K603. Residues C898, C901, C918, and C921 each contribute to the Zn(2+) site.

This sequence belongs to the class-I aminoacyl-tRNA synthetase family. IleS type 1 subfamily. In terms of assembly, monomer. Zn(2+) serves as cofactor.

The protein localises to the cytoplasm. It carries out the reaction tRNA(Ile) + L-isoleucine + ATP = L-isoleucyl-tRNA(Ile) + AMP + diphosphate. Its function is as follows. Catalyzes the attachment of isoleucine to tRNA(Ile). As IleRS can inadvertently accommodate and process structurally similar amino acids such as valine, to avoid such errors it has two additional distinct tRNA(Ile)-dependent editing activities. One activity is designated as 'pretransfer' editing and involves the hydrolysis of activated Val-AMP. The other activity is designated 'posttransfer' editing and involves deacylation of mischarged Val-tRNA(Ile). This chain is Isoleucine--tRNA ligase, found in Desulforamulus reducens (strain ATCC BAA-1160 / DSM 100696 / MI-1) (Desulfotomaculum reducens).